Reading from the N-terminus, the 524-residue chain is Putative cysteine ligase BshC (524 aa).

A coiled-coil region spans residues 437–457 (AQALDRSARKINYQIEKMERK).

The protein belongs to the BshC family.

The polypeptide is Putative cysteine ligase BshC (Solibacter usitatus (strain Ellin6076)).